The following is a 306-amino-acid chain: MATH domain and coiled-coil domain-containing protein At3g29580 (306 aa).

One can recognise an MATH domain in the interval 6-132 (DNKFTWVIKN…NGEIKIVVEF (127 aa)). Positions 253–298 (FKLDWLEKKLNEVLEKKEKEESYETRMREIEEEMKDLKAKALDVGA) form a coiled coil.

In Arabidopsis thaliana (Mouse-ear cress), this protein is MATH domain and coiled-coil domain-containing protein At3g29580.